We begin with the raw amino-acid sequence, 112 residues long: UPF0060 membrane protein SAV_4756 (112 aa).

4 consecutive transmembrane segments (helical) span residues Ala-8 to Val-28, Gly-33 to Leu-53, Ile-62 to Asp-82, and Val-91 to Gly-111.

This sequence belongs to the UPF0060 family.

The protein localises to the cell membrane. The protein is UPF0060 membrane protein SAV_4756 of Streptomyces avermitilis (strain ATCC 31267 / DSM 46492 / JCM 5070 / NBRC 14893 / NCIMB 12804 / NRRL 8165 / MA-4680).